A 355-amino-acid polypeptide reads, in one-letter code: CX3C chemokine receptor 1 (355 aa).

At 1–31 (MDQFPESVTENFEYDDLAEACYIGDIVVFGT) the chain is on the extracellular side. A helical transmembrane segment spans residues 32-59 (VFLSIFYSVIFAIGLVGNLLVVFALTNS). Topologically, residues 60–69 (KKPKSVTDIY) are cytoplasmic. A helical transmembrane segment spans residues 70 to 90 (LLNLALSDLLFVATLPFWTHY). The Extracellular segment spans residues 91-103 (LINEKGLHNAMCK). C102 and C175 are joined by a disulfide. Residues 104–125 (FTTAFFFIGFFGSIFFITVISI) traverse the membrane as a helical segment. Residues 126-142 (DRYLAIVLAANSMNNRT) lie on the Cytoplasmic side of the membrane. The helical transmembrane segment at 143–167 (VQHGVTISLGVWAAAILVAAPQFMF) threads the bilayer. The Extracellular segment spans residues 168 to 195 (TKQKENECLGDYPEVLQEIWPVLRNVET). A helical transmembrane segment spans residues 196–215 (NFLGFLLPLLIMSYCYFRII). Over 216 to 231 (QTLFSCKNHKKAKAIK) the chain is Cytoplasmic. A helical transmembrane segment spans residues 232 to 256 (LILLVVIVFFLFWTPYNVMIFLETL). The Extracellular segment spans residues 257 to 273 (KLYDFFPSCDMRKDLRL). The chain crosses the membrane as a helical span at residues 274 to 297 (ALSVTETVAFSHCCLNPLIYAFAG). Residues 298–355 (EKFRRYLYHLYGKCLAVLCGRSVHVDFSSSESQRSRHGSVLSSNFTYHTSDGDALLLL) lie on the Cytoplasmic side of the membrane. T346 is modified (phosphothreonine).

It belongs to the G-protein coupled receptor 1 family. As to quaternary structure, found in a ternary complex with CX3CL1 and ITGAV:ITGB3 or ITGA4:ITGB1. (Microbial infection) Interacts with human respiratory syncytial virus (HRSV) protein G; this interaction modulates host immune response. In terms of assembly, (Microbial infection) Interacts with HIV-1 envelope polyprotein gp160. In terms of processing, this protein is not N-glycosylated which is unusual for G-protein-coupled receptors. Expressed in lymphoid and neural tissues. Expressed in lymphocyte subsets, such as natural killer (NK) cells, gamma-delta T-cells and terminally differentiated CD8(+) T-cells. Expressed in smooth muscle cells in atherosclerotic plaques.

It is found in the cell membrane. In terms of biological role, receptor for the C-X3-C chemokine fractalkine (CX3CL1) present on many early leukocyte cells; CX3CR1-CX3CL1 signaling exerts distinct functions in different tissue compartments, such as immune response, inflammation, cell adhesion and chemotaxis. CX3CR1-CX3CL1 signaling mediates cell migratory functions. Responsible for the recruitment of natural killer (NK) cells to inflamed tissues. Acts as a regulator of inflammation process leading to atherogenesis by mediating macrophage and monocyte recruitment to inflamed atherosclerotic plaques, promoting cell survival. Involved in airway inflammation by promoting interleukin 2-producing T helper (Th2) cell survival in inflamed lung. Involved in the migration of circulating monocytes to non-inflamed tissues, where they differentiate into macrophages and dendritic cells. Acts as a negative regulator of angiogenesis, probably by promoting macrophage chemotaxis. Plays a key role in brain microglia by regulating inflammatory response in the central nervous system (CNS) and regulating synapse maturation. Required to restrain the microglial inflammatory response in the CNS and the resulting parenchymal damage in response to pathological stimuli. Involved in brain development by participating in synaptic pruning, a natural process during which brain microglia eliminates extra synapses during postnatal development. Synaptic pruning by microglia is required to promote the maturation of circuit connectivity during brain development. Acts as an important regulator of the gut microbiota by controlling immunity to intestinal bacteria and fungi. Expressed in lamina propria dendritic cells in the small intestine, which form transepithelial dendrites capable of taking up bacteria in order to provide defense against pathogenic bacteria. Required to initiate innate and adaptive immune responses against dissemination of commensal fungi (mycobiota) component of the gut: expressed in mononuclear phagocytes (MNPs) and acts by promoting induction of antifungal IgG antibodies response to confer protection against disseminated C.albicans or C.auris infection. Also acts as a receptor for C-C motif chemokine CCL26, inducing cell chemotaxis. (Microbial infection) Acts as a coreceptor with CD4 for HIV-1 virus envelope protein. Its function is as follows. (Microbial infection) Acts as a coreceptor with CD4 for HIV-1 virus envelope protein. May have more potent HIV-1 coreceptothr activity than isoform 1. Functionally, (Microbial infection) Acts as a coreceptor with CD4 for HIV-1 virus envelope protein. May have more potent HIV-1 coreceptor activity than isoform 1. The sequence is that of CX3C chemokine receptor 1 from Homo sapiens (Human).